The chain runs to 506 residues: MAQKKKEELSDLIEASGREEDLNELMRVRREKLAELRDKGIEPYGGRFERTHTARYILDNFVEMENRPVVIAGRIMSRRGMGKATFAHIQDGTGQIQIYVRLNDVGPESYELFGRLDIGDIIGVQGSVFKTRMGEITVAAESFKILSKSLRPLPEKWHGLRDVELRYRQRYVDLIVNPEVKEVFETRSKIIRACRNFLDGKGFLEVETPMMQVIPGGAAARPFITHHNALDMDLYLRIAPELYLKRLLVGGFEKVYEINRNFRNEGISTKHNPEFTMLELYQAYADYTDMMNLTEELISAVAVEALGTTKIEYQGTEIDLAPPWPRIPMLETIKVHAGLDFGALKSAEEAFKAVEQAGIGLELDPSDSWGTIVNKVFEEVVEPKLIQPTFVVDYPVEISPLAKRKAEDPELTYRFELFIYGREIANAFSELNDPIDQKGRFLKQVEKRKAGDEEAHMMDEDYINALEYGMPPAGGLGIGIDRLVMLLTNSASIRDVILFPLMKPRE.

Residues Glu-416 and Glu-423 each contribute to the Mg(2+) site.

Belongs to the class-II aminoacyl-tRNA synthetase family. As to quaternary structure, homodimer. Requires Mg(2+) as cofactor.

It localises to the cytoplasm. The catalysed reaction is tRNA(Lys) + L-lysine + ATP = L-lysyl-tRNA(Lys) + AMP + diphosphate. In Pelotomaculum thermopropionicum (strain DSM 13744 / JCM 10971 / SI), this protein is Lysine--tRNA ligase.